The primary structure comprises 66 residues: Large ribosomal subunit protein bL31 (66 aa).

Zn(2+) contacts are provided by cysteine 16, cysteine 18, cysteine 36, and cysteine 39.

It belongs to the bacterial ribosomal protein bL31 family. Type A subfamily. As to quaternary structure, part of the 50S ribosomal subunit. Zn(2+) is required as a cofactor.

In terms of biological role, binds the 23S rRNA. The polypeptide is Large ribosomal subunit protein bL31 (Geobacillus sp. (strain WCH70)).